Reading from the N-terminus, the 222-residue chain is Small ribosomal subunit protein uS3 (222 aa).

The region spanning 39–107 (VREFLHKKLA…PVQINIEEVR (69 aa)) is the KH type-2 domain.

The protein belongs to the universal ribosomal protein uS3 family. Part of the 30S ribosomal subunit. Forms a tight complex with proteins S10 and S14.

In terms of biological role, binds the lower part of the 30S subunit head. Binds mRNA in the 70S ribosome, positioning it for translation. The chain is Small ribosomal subunit protein uS3 from Francisella tularensis subsp. tularensis (strain FSC 198).